The primary structure comprises 303 residues: Diaminopimelate epimerase (303 aa).

The substrate site is built by Asn15, Gln47, and Asn67. The active-site Proton donor is Cys76. Substrate contacts are provided by residues 77–78 (GN), Asn163, Asn197, and 215–216 (ER). The active-site Proton acceptor is the Cys224. Residue 225–226 (GS) participates in substrate binding. The tract at residues 279-303 (DPATGEWSRDTQGLQGSGNADRGTA) is disordered.

The protein belongs to the diaminopimelate epimerase family. In terms of assembly, homodimer.

It localises to the cytoplasm. It catalyses the reaction (2S,6S)-2,6-diaminopimelate = meso-2,6-diaminopimelate. It participates in amino-acid biosynthesis; L-lysine biosynthesis via DAP pathway; DL-2,6-diaminopimelate from LL-2,6-diaminopimelate: step 1/1. In terms of biological role, catalyzes the stereoinversion of LL-2,6-diaminopimelate (L,L-DAP) to meso-diaminopimelate (meso-DAP), a precursor of L-lysine and an essential component of the bacterial peptidoglycan. This chain is Diaminopimelate epimerase, found in Brucella canis (strain ATCC 23365 / NCTC 10854 / RM-666).